The following is a 204-amino-acid chain: uncharacterized protein (204 aa).

Histidine 9 functions as the Tele-phosphohistidine intermediate in the catalytic mechanism. Catalysis depends on glutamate 86, which acts as the Proton donor/acceptor.

The protein belongs to the phosphoglycerate mutase family.

This is an uncharacterized protein from Acanthamoeba polyphaga (Amoeba).